Here is a 278-residue protein sequence, read N- to C-terminus: Dermonecrotic toxin LlSicTox-alphaIII3ii (278 aa).

The active site involves His-5. Residues Glu-25 and Asp-27 each coordinate Mg(2+). The active-site Nucleophile is the His-40. Residues Cys-44 and Cys-50 are joined by a disulfide bond. Asp-84 serves as a coordination point for Mg(2+).

Belongs to the arthropod phospholipase D family. Class I subfamily. Mg(2+) serves as cofactor. In terms of tissue distribution, expressed by the venom gland.

Its subcellular location is the secreted. It carries out the reaction an N-(acyl)-sphingosylphosphocholine = an N-(acyl)-sphingosyl-1,3-cyclic phosphate + choline. The catalysed reaction is an N-(acyl)-sphingosylphosphoethanolamine = an N-(acyl)-sphingosyl-1,3-cyclic phosphate + ethanolamine. It catalyses the reaction a 1-acyl-sn-glycero-3-phosphocholine = a 1-acyl-sn-glycero-2,3-cyclic phosphate + choline. The enzyme catalyses a 1-acyl-sn-glycero-3-phosphoethanolamine = a 1-acyl-sn-glycero-2,3-cyclic phosphate + ethanolamine. Dermonecrotic toxins cleave the phosphodiester linkage between the phosphate and headgroup of certain phospholipids (sphingolipid and lysolipid substrates), forming an alcohol (often choline) and a cyclic phosphate. This toxin acts on sphingomyelin (SM). It may also act on ceramide phosphoethanolamine (CPE), lysophosphatidylcholine (LPC) and lysophosphatidylethanolamine (LPE), but not on lysophosphatidylserine (LPS), and lysophosphatidylglycerol (LPG). It acts by transphosphatidylation, releasing exclusively cyclic phosphate products as second products. Induces dermonecrosis, hemolysis, increased vascular permeability, edema, inflammatory response, and platelet aggregation. The sequence is that of Dermonecrotic toxin LlSicTox-alphaIII3ii from Loxosceles laeta (South American recluse spider).